The primary structure comprises 146 residues: DNA-directed RNA polymerase subunit beta (146 aa).

This sequence belongs to the RNA polymerase beta chain family. In terms of assembly, the RNAP catalytic core consists of 2 alpha, 1 beta, 1 beta' and 1 omega subunit. When a sigma factor is associated with the core the holoenzyme is formed, which can initiate transcription.

It catalyses the reaction RNA(n) + a ribonucleoside 5'-triphosphate = RNA(n+1) + diphosphate. Its function is as follows. DNA-dependent RNA polymerase catalyzes the transcription of DNA into RNA using the four ribonucleoside triphosphates as substrates. The polypeptide is DNA-directed RNA polymerase subunit beta (rpoB) (Liberibacter africanus (Citrus greening disease)).